The sequence spans 425 residues: Multifunctional CCA protein (425 aa).

Residues Gly-8 and Arg-11 each coordinate ATP. CTP is bound by residues Gly-8 and Arg-11. Glu-21 and Asp-23 together coordinate Mg(2+). Residues Arg-91, Arg-137, and Arg-140 each coordinate ATP. 3 residues coordinate CTP: Arg-91, Arg-137, and Arg-140. Positions 228–329 constitute an HD domain; it reads TGVHTLMVLD…VDLLDRLGAL (102 aa).

The protein belongs to the tRNA nucleotidyltransferase/poly(A) polymerase family. Bacterial CCA-adding enzyme type 1 subfamily. In terms of assembly, monomer. Can also form homodimers and oligomers. Requires Mg(2+) as cofactor. Ni(2+) serves as cofactor.

The enzyme catalyses a tRNA precursor + 2 CTP + ATP = a tRNA with a 3' CCA end + 3 diphosphate. It catalyses the reaction a tRNA with a 3' CCA end + 2 CTP + ATP = a tRNA with a 3' CCACCA end + 3 diphosphate. In terms of biological role, catalyzes the addition and repair of the essential 3'-terminal CCA sequence in tRNAs without using a nucleic acid template. Adds these three nucleotides in the order of C, C, and A to the tRNA nucleotide-73, using CTP and ATP as substrates and producing inorganic pyrophosphate. tRNA 3'-terminal CCA addition is required both for tRNA processing and repair. Also involved in tRNA surveillance by mediating tandem CCA addition to generate a CCACCA at the 3' terminus of unstable tRNAs. While stable tRNAs receive only 3'-terminal CCA, unstable tRNAs are marked with CCACCA and rapidly degraded. In Methylococcus capsulatus (strain ATCC 33009 / NCIMB 11132 / Bath), this protein is Multifunctional CCA protein.